A 285-amino-acid polypeptide reads, in one-letter code: uncharacterized protein (285 aa).

Residues 6–26 (IKYFSTIIVAVVAVLAGWWLW) form a helical membrane-spanning segment.

It belongs to the membrane fusion protein (MFP) (TC 8.A.1) family.

Its subcellular location is the membrane. This is an uncharacterized protein from Escherichia coli (strain K12).